A 78-amino-acid polypeptide reads, in one-letter code: Defensin-like protein 74 (78 aa).

Positions 1 to 28 (MNYKIGIMSLLVITSIIFLFLVPDKVEA) are cleaved as a signal peptide. 4 disulfide bridges follow: C32/C73, C36/C58, C42/C71, and C46/C72.

Belongs to the DEFL family.

It is found in the secreted. This is Defensin-like protein 74 (LCR43) from Arabidopsis thaliana (Mouse-ear cress).